The chain runs to 155 residues: Ribosomal RNA large subunit methyltransferase H (155 aa).

Residues leucine 72, glycine 103, and 122 to 127 (LSDLTL) each bind S-adenosyl-L-methionine.

Belongs to the RNA methyltransferase RlmH family. As to quaternary structure, homodimer.

It is found in the cytoplasm. The enzyme catalyses pseudouridine(1915) in 23S rRNA + S-adenosyl-L-methionine = N(3)-methylpseudouridine(1915) in 23S rRNA + S-adenosyl-L-homocysteine + H(+). Its function is as follows. Specifically methylates the pseudouridine at position 1915 (m3Psi1915) in 23S rRNA. This Paracidovorax citrulli (strain AAC00-1) (Acidovorax citrulli) protein is Ribosomal RNA large subunit methyltransferase H.